An 842-amino-acid polypeptide reads, in one-letter code: Oxysterol-binding protein-related protein 7 (842 aa).

A disordered region spans residues 1–28; that stretch reads MDFQERDPPFLPESAQSSKPSSAQQASE. Positions 14-27 are enriched in low complexity; it reads SAQSSKPSSAQQAS. Residues 47-142 form the PH domain; that stretch reads PERQEGHLLK…WVAQLRAHRL (96 aa). The residue at position 171 (threonine 171) is a Phosphothreonine. A phosphoserine mark is found at serine 217, serine 226, serine 256, and serine 272. The interval 330–369 is disordered; sequence DMHQGSELSRMGVSEASTGQRRLHSLSTSSDTTADSFSSL. A compositionally biased stretch (low complexity) spans 354-369; that stretch reads SLSTSSDTTADSFSSL.

This sequence belongs to the OSBP family. As to expression, expressed in epithelium of small and large intestines (at protein level). Expressed in stomach, duodenum, jejunum, ascending colon, spleen, thymus, lymph node, trachea and leukocytes.

It localises to the cytoplasm. The protein resides in the cytosol. Its subcellular location is the endoplasmic reticulum membrane. The protein localises to the cell membrane. The polypeptide is Oxysterol-binding protein-related protein 7 (OSBPL7) (Homo sapiens (Human)).